The chain runs to 770 residues: Metabotropic glutamate receptor-like protein F (770 aa).

Residues 1–22 form the signal peptide; sequence MKIKNFIYFLIYFIFLFKVING. The Extracellular segment spans residues 23-370; sequence QNKTCKISVL…STVDYPESLK (348 aa). N-linked (GlcNAc...) asparagine glycosylation is found at N24, N185, N260, N286, N319, and N344. Residues 371-391 traverse the membrane as a helical segment; sequence IGVTVVSGFCIFLCLISMIIV. Topologically, residues 392–405 are cytoplasmic; the sequence is IKFKEAKVIKSSSP. The helical transmembrane segment at 406–426 threads the bilayer; sequence IFCLLILFGCIVIFVGCIMFA. Topologically, residues 427-442 are extracellular; it reads RSPTDGSCRSRVWLLS. The chain crosses the membrane as a helical span at residues 443–463; sequence LGYTIFLGNLMVKNWRIWLLF. The Cytoplasmic segment spans residues 464-483; sequence DNPKLKKRAITNWKLYPWVS. Residues 484–504 traverse the membrane as a helical segment; it reads GIVIIDIVILSIWQALGDIVA. The Extracellular portion of the chain corresponds to 505-528; the sequence is ESRTGIDSLTKYEYRNVCASSDQG. Residues 529–549 traverse the membrane as a helical segment; the sequence is SIALYLLLVFHGLILLVACFI. The Cytoplasmic segment spans residues 550 to 565; it reads SFKIKVVDIEEFNESK. Residues 566–586 form a helical membrane-spanning segment; it reads PITTSVYIITFCLFIVIPIMV. Over 587–594 the chain is Extracellular; that stretch reads SSPTVTTQ. Residues 595 to 615 form a helical membrane-spanning segment; that stretch reads TTIICICALITTMLSIILLFG. Residues 616-770 are Cytoplasmic-facing; that stretch reads TKFFKMITVG…GQTEIDSNDV (155 aa). The tract at residues 639–740 is disordered; that stretch reads SSHSQRTKSS…EEKQKDEEEI (102 aa). 2 stretches are compositionally biased toward basic and acidic residues: residues 676–693 and 730–740; these read SSEKEKKKPIESNPKDHM and NEEKQKDEEEI. Positions 715-760 form a coiled coil; sequence REQINDNIILENNNDNEEKQKDEEEIKEEKLLVSEIQAKRLSLEQN.

It in the N-terminal section; belongs to the BMP lipoprotein family. In the C-terminal section; belongs to the G-protein coupled receptor 3 family. GABA-B receptor subfamily.

It is found in the membrane. In Dictyostelium discoideum (Social amoeba), this protein is Metabotropic glutamate receptor-like protein F (grlF).